A 196-amino-acid polypeptide reads, in one-letter code: Glutathione-specific gamma-glutamylcyclotransferase 1 (196 aa).

Residue 15–20 (IFGYGS) coordinates substrate. The active-site Proton acceptor is E95.

The protein belongs to the gamma-glutamylcyclotransferase family. ChaC subfamily.

It is found in the cytoplasm. The protein localises to the cytosol. It localises to the golgi apparatus. The protein resides in the trans-Golgi network. It carries out the reaction glutathione = L-cysteinylglycine + 5-oxo-L-proline. In terms of biological role, catalyzes the cleavage of glutathione into 5-oxo-L-proline and a Cys-Gly dipeptide. Acts specifically on glutathione, but not on other gamma-glutamyl peptides. Glutathione depletion is an important factor for apoptosis initiation and execution. Acts as a pro-apoptotic component of the unfolded protein response pathway by mediating the pro-apoptotic effects of the ATF4-ATF3-DDIT3/CHOP cascade. Negative regulator of Notch signaling pathway involved in embryonic neurogenesis: acts by inhibiting Notch cleavage by furin, maintaining Notch in an immature inactive form, thereby promoting neurogenesis in embryos. The protein is Glutathione-specific gamma-glutamylcyclotransferase 1 of Danio rerio (Zebrafish).